The sequence spans 291 residues: Basic helix-loop-helix protein 80 (291 aa).

Residues 65 to 120 form a disordered region; that stretch reads SAVLDTSPSVDRKRKAAEDSAHSKDSCKDGKSRRGKKASKEVEEKSTTEDEPPKGY. Over residues 80–117 the composition is skewed to basic and acidic residues; the sequence is AAEDSAHSKDSCKDGKSRRGKKASKEVEEKSTTEDEPP. Residues 125–132 carry the Nuclear localization signal motif; it reads ARRGQATD. The interval 129-142 is basic motif; degenerate; the sequence is QATDSHSLAERVRR. In terms of domain architecture, bHLH spans 129 to 179; the sequence is QATDSHSLAERVRRERISERMRMLQALVPGCDKVTGKALILDEIINYVQSL. A helix-loop-helix motif region spans residues 143–179; that stretch reads ERISERMRMLQALVPGCDKVTGKALILDEIINYVQSL.

Belongs to the bHLH protein family. Homodimer. Interacts with IBH1, BC1 and LO9-177.

The protein resides in the nucleus. Functionally, together with BCL2, positive regulator of cell elongation at least partially through increased gibberellic acid (GA) biosynthesis. The protein is Basic helix-loop-helix protein 80 of Oryza sativa subsp. indica (Rice).